A 255-amino-acid chain; its full sequence is MTAAASDPHNPRSSADDTASPRCESGQGSFFGRRKGHKLRPHQNGLIEHLLPRLSLDPGASGPSDPATLFGRPVKEMRIEIGFGGGEHLVAEALAFPRTGFIGCEPYVNGMAKILSQIEAHDIGNIRLLAGDASELLAWLPRASLARIDLIHPDPWPKRRHWKRRFVQDATVAEMARVLRPGGEFRFVSDIADYCAWTLSHLARSPGFLWLAERATDWHNPWPDYTMTRYGRKAEREGRRAAYLRFRRESDAAQA.

The segment at 1–37 (MTAAASDPHNPRSSADDTASPRCESGQGSFFGRRKGH) is disordered. The S-adenosyl-L-methionine site is built by Glu-80, Glu-105, Asp-132, and Asp-154. The active site involves Asp-154. Substrate is bound by residues Lys-158 and Asp-190.

The protein belongs to the class I-like SAM-binding methyltransferase superfamily. TrmB family.

The catalysed reaction is guanosine(46) in tRNA + S-adenosyl-L-methionine = N(7)-methylguanosine(46) in tRNA + S-adenosyl-L-homocysteine. The protein operates within tRNA modification; N(7)-methylguanine-tRNA biosynthesis. Catalyzes the formation of N(7)-methylguanine at position 46 (m7G46) in tRNA. This is tRNA (guanine-N(7)-)-methyltransferase from Nitrobacter hamburgensis (strain DSM 10229 / NCIMB 13809 / X14).